The chain runs to 343 residues: MGVPIGDLVPRKEIDLENLYGKKIAIDALNAIYQFLSTIRQRDGTPLMDSKGRITSHLSGLFYRTINLMEAGIKPAYVFDGKPPEFKRKELEKRREAREEAELKWKEALAKGNLEEARKYAQRATKVNEMLIEDAKKLLQLMGIPIIQAPSEGEAQAAYMASKGDVYASASQDYDSLLFGAPRLIRNLTITGKRKMPGKDVYVEIKPELVVLDEVLKELKITREKLIELAILVGTDYNPGGVKGIGPKKALEIVRYSRDPLAKFQRQSDVDLYAIKEFFLNPPVTNEYSLSWKEPDEEGILKFLCDEHNFSEERVKNGIERLKKAIKAGRQSTLESWFVKKKP.

Residues 1-98 form an N-domain region; sequence MGVPIGDLVP…KELEKRREAR (98 aa). Residues Asp-27, Asp-80, Glu-152, Glu-154, Asp-173, Asp-175, and Asp-236 each coordinate Mg(2+). The tract at residues 116–258 is I-domain; sequence EARKYAQRAT…KALEIVRYSR (143 aa). The tract at residues 330-338 is interaction with PCNA; sequence RQSTLESWF.

This sequence belongs to the XPG/RAD2 endonuclease family. FEN1 subfamily. As to quaternary structure, interacts with PCNA. PCNA stimulates the nuclease activity without altering cleavage specificity. Mg(2+) is required as a cofactor.

In terms of biological role, structure-specific nuclease with 5'-flap endonuclease and 5'-3' exonuclease activities involved in DNA replication and repair. During DNA replication, cleaves the 5'-overhanging flap structure that is generated by displacement synthesis when DNA polymerase encounters the 5'-end of a downstream Okazaki fragment. Binds the unpaired 3'-DNA end and kinks the DNA to facilitate 5' cleavage specificity. Cleaves one nucleotide into the double-stranded DNA from the junction in flap DNA, leaving a nick for ligation. Also involved in the base excision repair (BER) pathway. Acts as a genome stabilization factor that prevents flaps from equilibrating into structures that lead to duplications and deletions. Also possesses 5'-3' exonuclease activity on nicked or gapped double-stranded DNA. The chain is Flap endonuclease 1 from Pyrococcus horikoshii (strain ATCC 700860 / DSM 12428 / JCM 9974 / NBRC 100139 / OT-3).